The primary structure comprises 402 residues: Speedy protein E21 (402 aa).

A disordered region spans residues 1 to 90; that stretch reads MDRTETRFRK…EPEKELAPEP (90 aa). The segment covering 16–39 has biased composition (polar residues); that stretch reads GKITTSRQLHPQNEQSPQRSTSGY. A compositionally biased stretch (acidic residues) spans 76–90; sequence DESEEEPEKELAPEP.

Belongs to the Speedy/Ringo family.

The chain is Speedy protein E21 from Homo sapiens (Human).